The following is a 663-amino-acid chain: Cytoplasmic dynein 1 intermediate chain (663 aa).

The segment covering 17 to 37 has biased composition (basic and acidic residues); sequence LREEKDRRRREKEIKDMEEAA. Disordered regions lie at residues 17-52 and 75-107; these read LREE…DQRK and SVNS…KKQP. Low complexity predominate over residues 75–85; that stretch reads SVNSMTSDNSN. Positions 86–99 are enriched in polar residues; the sequence is TQTPDASLQATVNG. WD repeat units lie at residues 311 to 360, 364 to 404, 413 to 454, 463 to 503, 508 to 553, 556 to 596, and 602 to 641; these read SKNR…STPE, HCQS…RTPI, AHTH…QPQD, SKAI…SGVN, RHLG…PLYS, DNSD…EVPT, and AGAP…AQPS.

It belongs to the dynein intermediate chain family. Homodimer. The cytoplasmic dynein 1 complex consists of two catalytic heavy chains (HCs) and a number of non-catalytic subunits presented by intermediate chains (ICs), light intermediate chains (LICs) and light chains (LCs). In terms of tissue distribution, high levels of isoform 1b, isoform 1c, isoform 3a and isoform 4 accumulate in early egg chambers and at stage 9 become concentrated at the posterior of the oocyte. Isoform 5a and isoform 5b are highly expressed in adult head and to a lesser extent in adult torso. Isoform 1a, isoform 2a and isoform 2b are found in all tissues examined, including ovaries, midgut, torso and head.

Its subcellular location is the cytoplasm. It localises to the cytoskeleton. It is found in the lysosome membrane. The protein resides in the nucleus membrane. In terms of biological role, acts as one of several non-catalytic accessory components of the cytoplasmic dynein 1 complex that are thought to be involved in linking dynein to cargos and to adapter proteins that regulate dynein function. Cytoplasmic dynein 1 acts as a motor for the intracellular retrograde motility of vesicles and organelles along microtubules. The intermediate chains mediate the help dynein bind to dynactin 150 kDa component. The protein is Cytoplasmic dynein 1 intermediate chain (sw) of Drosophila melanogaster (Fruit fly).